Consider the following 522-residue polypeptide: Maturase K (522 aa).

The protein belongs to the intron maturase 2 family. MatK subfamily.

Its subcellular location is the plastid. It is found in the chloroplast. Its function is as follows. Usually encoded in the trnK tRNA gene intron. Probably assists in splicing its own and other chloroplast group II introns. The chain is Maturase K from Sapindus saponaria (Soapberry).